Here is a 370-residue protein sequence, read N- to C-terminus: Putative alanine racemase 2 (370 aa).

The active-site Proton acceptor; specific for D-alanine is lysine 38. At lysine 38 the chain carries N6-(pyridoxal phosphate)lysine. The Proton acceptor; specific for L-alanine role is filled by tyrosine 266.

The protein belongs to the alanine racemase family. Pyridoxal 5'-phosphate is required as a cofactor.

It catalyses the reaction L-alanine = D-alanine. This Schizosaccharomyces pombe (strain 972 / ATCC 24843) (Fission yeast) protein is Putative alanine racemase 2 (alr2).